We begin with the raw amino-acid sequence, 343 residues long: Dual-specificity RNA methyltransferase RlmN (343 aa).

The active-site Proton acceptor is the E92. One can recognise a Radical SAM core domain in the interval 98-325 (DEDRTTLCIS…VITRSSRGSD (228 aa)). C105 and C330 form a disulfide bridge. 3 residues coordinate [4Fe-4S] cluster: C112, C116, and C119. Residues 157-158 (GE), S189, 211-213 (SLN), and N287 each bind S-adenosyl-L-methionine. C330 serves as the catalytic S-methylcysteine intermediate.

The protein belongs to the radical SAM superfamily. RlmN family. [4Fe-4S] cluster serves as cofactor.

It is found in the cytoplasm. The catalysed reaction is adenosine(2503) in 23S rRNA + 2 reduced [2Fe-2S]-[ferredoxin] + 2 S-adenosyl-L-methionine = 2-methyladenosine(2503) in 23S rRNA + 5'-deoxyadenosine + L-methionine + 2 oxidized [2Fe-2S]-[ferredoxin] + S-adenosyl-L-homocysteine. The enzyme catalyses adenosine(37) in tRNA + 2 reduced [2Fe-2S]-[ferredoxin] + 2 S-adenosyl-L-methionine = 2-methyladenosine(37) in tRNA + 5'-deoxyadenosine + L-methionine + 2 oxidized [2Fe-2S]-[ferredoxin] + S-adenosyl-L-homocysteine. Specifically methylates position 2 of adenine 2503 in 23S rRNA and position 2 of adenine 37 in tRNAs. m2A2503 modification seems to play a crucial role in the proofreading step occurring at the peptidyl transferase center and thus would serve to optimize ribosomal fidelity. This Geotalea uraniireducens (strain Rf4) (Geobacter uraniireducens) protein is Dual-specificity RNA methyltransferase RlmN.